Here is a 301-residue protein sequence, read N- to C-terminus: Glycine--tRNA ligase alpha subunit (301 aa).

This sequence belongs to the class-II aminoacyl-tRNA synthetase family. Tetramer of two alpha and two beta subunits.

It localises to the cytoplasm. It catalyses the reaction tRNA(Gly) + glycine + ATP = glycyl-tRNA(Gly) + AMP + diphosphate. The polypeptide is Glycine--tRNA ligase alpha subunit (Shewanella loihica (strain ATCC BAA-1088 / PV-4)).